The following is a 725-amino-acid chain: IML2-like protein SCY_3392 (725 aa).

At Thr196 the chain carries Phosphothreonine. Phosphoserine occurs at positions 246, 377, and 380.

Belongs to the IML2 family.

The protein resides in the cytoplasm. Its subcellular location is the nucleus. May be involved in mitochondrial DNA stability. The protein is IML2-like protein SCY_3392 of Saccharomyces cerevisiae (strain YJM789) (Baker's yeast).